A 510-amino-acid chain; its full sequence is 2,3-bisphosphoglycerate-independent phosphoglycerate mutase (510 aa).

Aspartate 15 and serine 65 together coordinate Mn(2+). The active-site Phosphoserine intermediate is the serine 65. Substrate-binding positions include histidine 126, 155–156, arginine 187, arginine 193, 259–262, and lysine 332; these read RD and RPDR. Aspartate 399, histidine 403, aspartate 440, histidine 441, and histidine 458 together coordinate Mn(2+).

It belongs to the BPG-independent phosphoglycerate mutase family. Mn(2+) is required as a cofactor.

The protein resides in the plastid. The protein localises to the chloroplast. It catalyses the reaction (2R)-2-phosphoglycerate = (2R)-3-phosphoglycerate. It participates in carbohydrate degradation; glycolysis; pyruvate from D-glyceraldehyde 3-phosphate: step 3/5. Its function is as follows. Catalyzes the interconversion of 2-phosphoglycerate and 3-phosphoglycerate. This Antithamnion sp. (Red alga) protein is 2,3-bisphosphoglycerate-independent phosphoglycerate mutase.